The chain runs to 308 residues: uncharacterized protein (308 aa).

A disordered region spans residues 19–43; sequence EPQASGAGPAQTPPPVTVPMTPPSK. Pro residues predominate over residues 29–43; that stretch reads QTPPPVTVPMTPPSK.

This is an uncharacterized protein from Deinococcus radiodurans (strain ATCC 13939 / DSM 20539 / JCM 16871 / CCUG 27074 / LMG 4051 / NBRC 15346 / NCIMB 9279 / VKM B-1422 / R1).